The following is an 837-amino-acid chain: Anaphase-promoting complex subunit 2 (837 aa).

Ser-233, Ser-329, Ser-485, Ser-549, and Ser-712 each carry phosphoserine. The disordered stretch occupies residues 478-508 (CLETGQDSEDDSGEPEDWVPDPVDADPVKSS). Over residues 483 to 496 (QDSEDDSGEPEDWV) the composition is skewed to acidic residues. Residue Tyr-825 is modified to Phosphotyrosine.

Belongs to the cullin family. The mammalian APC/C is composed at least of 14 distinct subunits ANAPC1, ANAPC2, CDC27/APC3, ANAPC4, ANAPC5, CDC16/APC6, ANAPC7, CDC23/APC8, ANAPC10, ANAPC11, CDC26/APC12, ANAPC13, ANAPC15 and ANAPC16 that assemble into a complex of at least 19 chains with a combined molecular mass of around 1.2 MDa; APC/C interacts with FZR1 and FBXO5. In the context of the APC/C complex, directly interacts with UBE2C and UBE2S. Interacts (via cullin domain) with ANAPC11 and with UBCH10. Interacts with NEUROD2. Interacts with FBXO43; the interaction is direct.

The protein operates within protein modification; protein ubiquitination. Together with the RING-H2 protein ANAPC11, constitutes the catalytic component of the anaphase promoting complex/cyclosome (APC/C), a cell cycle-regulated E3 ubiquitin ligase that controls progression through mitosis and the G1 phase of the cell cycle. The APC/C complex acts by mediating ubiquitination and subsequent degradation of target proteins: it mainly mediates the formation of 'Lys-11'-linked polyubiquitin chains and, to a lower extent, the formation of 'Lys-48'- and 'Lys-63'-linked polyubiquitin chains. The APC/C complex catalyzes assembly of branched 'Lys-11'-/'Lys-48'-linked branched ubiquitin chains on target proteins. The CDC20-APC/C complex positively regulates the formation of synaptic vesicle clustering at active zone to the presynaptic membrane in postmitotic neurons. CDC20-APC/C-induced degradation of NEUROD2 drives presynaptic differentiation. This is Anaphase-promoting complex subunit 2 (Anapc2) from Mus musculus (Mouse).